The sequence spans 123 residues: Holo-[acyl-carrier-protein] synthase (123 aa).

Residues Asp8 and Glu60 each coordinate Mg(2+).

This sequence belongs to the P-Pant transferase superfamily. AcpS family. Requires Mg(2+) as cofactor.

Its subcellular location is the cytoplasm. The enzyme catalyses apo-[ACP] + CoA = holo-[ACP] + adenosine 3',5'-bisphosphate + H(+). In terms of biological role, transfers the 4'-phosphopantetheine moiety from coenzyme A to a Ser of acyl-carrier-protein. The chain is Holo-[acyl-carrier-protein] synthase from Ehrlichia ruminantium (strain Gardel).